The chain runs to 276 residues: Cell wall synthesis protein KRE9 (276 aa).

The signal sequence occupies residues M1–G21.

This sequence belongs to the KRE9/KNH1 family. In terms of processing, O-glycosylated.

The protein localises to the secreted. It localises to the cell wall. Functionally, involved in cell wall beta(1-&gt;6) glucan synthesis. The protein is Cell wall synthesis protein KRE9 of Saccharomyces cerevisiae (strain ATCC 204508 / S288c) (Baker's yeast).